Reading from the N-terminus, the 364-residue chain is DNA replication and repair protein RecF (364 aa).

30-37 (GENAQGKT) contacts ATP.

The protein belongs to the RecF family.

The protein localises to the cytoplasm. The RecF protein is involved in DNA metabolism; it is required for DNA replication and normal SOS inducibility. RecF binds preferentially to single-stranded, linear DNA. It also seems to bind ATP. The polypeptide is DNA replication and repair protein RecF (Streptococcus suis (strain 98HAH33)).